We begin with the raw amino-acid sequence, 376 residues long: Protein-glutamate methylesterase/protein-glutamine glutaminase 1 (376 aa).

The region spanning 4 to 121 is the Response regulatory domain; the sequence is KVLVVDDSSF…ARNRDEAVSL (118 aa). 4-aspartylphosphate is present on Asp-55. The disordered stretch occupies residues 138-169; it reads RPVASSTPVQERPQSTLNRPTTGLRREASAQA. The span at 141–158 shows a compositional bias: polar residues; that stretch reads ASSTPVQERPQSTLNRPT. The 194-residue stretch at 183–376 folds into the CheB-type methylesterase domain; that stretch reads SGKKYQLTAI…ERMLVEVGLA (194 aa). Catalysis depends on residues Ser-195, His-222, and Asp-318.

Belongs to the CheB family. In terms of processing, phosphorylated by CheA. Phosphorylation of the N-terminal regulatory domain activates the methylesterase activity.

The protein resides in the cytoplasm. It carries out the reaction [protein]-L-glutamate 5-O-methyl ester + H2O = L-glutamyl-[protein] + methanol + H(+). The catalysed reaction is L-glutaminyl-[protein] + H2O = L-glutamyl-[protein] + NH4(+). Its function is as follows. Involved in chemotaxis. Part of a chemotaxis signal transduction system that modulates chemotaxis in response to various stimuli. Catalyzes the demethylation of specific methylglutamate residues introduced into the chemoreceptors (methyl-accepting chemotaxis proteins or MCP) by CheR. Also mediates the irreversible deamidation of specific glutamine residues to glutamic acid. In Vibrio vulnificus (strain YJ016), this protein is Protein-glutamate methylesterase/protein-glutamine glutaminase 1.